A 509-amino-acid polypeptide reads, in one-letter code: Glycogen synthase (509 aa).

Residue Lys47 coordinates ADP-alpha-D-glucose.

This sequence belongs to the glycosyltransferase 1 family. Bacterial/plant glycogen synthase subfamily.

It catalyses the reaction [(1-&gt;4)-alpha-D-glucosyl](n) + ADP-alpha-D-glucose = [(1-&gt;4)-alpha-D-glucosyl](n+1) + ADP + H(+). It participates in glycan biosynthesis; glycogen biosynthesis. Its function is as follows. Synthesizes alpha-1,4-glucan chains using ADP-glucose. The protein is Glycogen synthase of Xanthomonas oryzae pv. oryzae (strain PXO99A).